The following is a 271-amino-acid chain: 2-dehydro-3-deoxyphosphooctonate aldolase (271 aa).

The protein belongs to the KdsA family.

It localises to the cytoplasm. The catalysed reaction is D-arabinose 5-phosphate + phosphoenolpyruvate + H2O = 3-deoxy-alpha-D-manno-2-octulosonate-8-phosphate + phosphate. It functions in the pathway carbohydrate biosynthesis; 3-deoxy-D-manno-octulosonate biosynthesis; 3-deoxy-D-manno-octulosonate from D-ribulose 5-phosphate: step 2/3. The protein operates within bacterial outer membrane biogenesis; lipopolysaccharide biosynthesis. The polypeptide is 2-dehydro-3-deoxyphosphooctonate aldolase (Campylobacter jejuni subsp. jejuni serotype O:23/36 (strain 81-176)).